A 326-amino-acid chain; its full sequence is Protein FAM50 homolog (326 aa).

The interval 77–111 (ISNRDLQVARGDQSSSTQSKDSQEAREKEEHVAKH) is disordered. Positions 97-109 (DSQEAREKEEHVA) are enriched in basic and acidic residues.

Belongs to the FAM50 family.

The chain is Protein FAM50 homolog from Caenorhabditis elegans.